Here is a 317-residue protein sequence, read N- to C-terminus: Ribosomal RNA small subunit methyltransferase H (317 aa).

S-adenosyl-L-methionine contacts are provided by residues 30–32 (GGH), D50, Y78, D95, and Q102.

The protein belongs to the methyltransferase superfamily. RsmH family.

It localises to the cytoplasm. The enzyme catalyses cytidine(1402) in 16S rRNA + S-adenosyl-L-methionine = N(4)-methylcytidine(1402) in 16S rRNA + S-adenosyl-L-homocysteine + H(+). In terms of biological role, specifically methylates the N4 position of cytidine in position 1402 (C1402) of 16S rRNA. This is Ribosomal RNA small subunit methyltransferase H from Nitrosomonas eutropha (strain DSM 101675 / C91 / Nm57).